A 633-amino-acid chain; its full sequence is Terminal nucleotidyltransferase 4B (633 aa).

Positions 1 to 115 are disordered; sequence MFRSGERPLG…GGGRADGGGG (115 aa). The segment covering 25–34 has biased composition (polar residues); that stretch reads ETTNNNNNHH. Low complexity-rich tracts occupy residues 36–52 and 60–70; these read PAAW…ASPV and RPAAALPASES. The span at 87 to 98 shows a compositional bias: polar residues; the sequence is ASTYGLNYSLLQ. Positions 103–115 are enriched in gly residues; that stretch reads RAAGGGRADGGGG. Residues aspartate 191 and aspartate 193 each coordinate Mg(2+). Residues glycine 254, lysine 279, serine 297, tyrosine 298, asparagine 382, and arginine 386 each coordinate ATP. Positions 322-382 constitute a PAP-associated domain; it reads NYGVLLIEFF…YIEDPLQPGN (61 aa). Residues 484 to 633 form a disordered region; sequence LGKCRSNASE…RDAPLSELCR (150 aa). Low complexity predominate over residues 492-519; sequence SEPLSKHSSNSSSGPVSSSSATQSSSSD. A Glycyl lysine isopeptide (Lys-Gly) (interchain with G-Cter in SUMO2) cross-link involves residue lysine 531. The segment covering 542–552 has biased composition (polar residues); the sequence is RVGSQDVSLEV. Position 545 is a phosphoserine (serine 545). Glycyl lysine isopeptide (Lys-Gly) (interchain with G-Cter in SUMO2) cross-links involve residues lysine 558, lysine 573, and lysine 587. Residues 559–614 show a composition bias toward polar residues; sequence MQSTQTTNTPNNANKSQHGSARLFRSSSKGFQGTAQTSHGALMTSKQHQGKSNTQY. Positions 618-624 match the Basic, involved in binding of the RNA primer motif; it reads KKRRHKR.

The protein belongs to the DNA polymerase type-B-like family. In terms of assembly, component of a nucleolar TRAMP-like complex, an ATP-dependent exosome regulatory complex consisting of a helicase (MTREX), an oligadenylate polymerase (TENT4B or TENT4A), and a substrate specific RNA-binding factor (ZCCHC7 or ZCCHC8). Several TRAMP-like complexes exist with specific compositions and are associated with nuclear, or nucleolar RNA exosomes. Requires Mg(2+) as cofactor. Mn(2+) is required as a cofactor.

It localises to the nucleus. The protein localises to the nucleolus. It is found in the cytoplasm. The enzyme catalyses RNA(n) + ATP = RNA(n)-3'-adenine ribonucleotide + diphosphate. Terminal nucleotidyltransferase that catalyzes preferentially the transfer of ATP and GTP on RNA 3' poly(A) tail creating a heterogeneous 3' poly(A) tail leading to mRNAs stabilization by protecting mRNAs from active deadenylation. Also functions as a catalytic subunit of a TRAMP-like complex which has a poly(A) RNA polymerase activity and is involved in a post-transcriptional quality control mechanism. Polyadenylation with short oligo(A) tails is required for the degradative activity of the exosome on several of its nuclear RNA substrates. Doesn't need a cofactor for polyadenylation activity (in vitro). Plays a role in replication-dependent histone mRNA degradation, probably through terminal uridylation of mature histone mRNAs. May play a role in sister chromatid cohesion. The chain is Terminal nucleotidyltransferase 4B from Mus musculus (Mouse).